Here is a 145-residue protein sequence, read N- to C-terminus: Deoxyuridine 5'-triphosphate nucleotidohydrolase (145 aa).

This sequence belongs to the dUTPase family. Requires Mg(2+) as cofactor.

It carries out the reaction dUTP + H2O = dUMP + diphosphate + H(+). In terms of biological role, this enzyme is involved in nucleotide metabolism: it produces dUMP, the immediate precursor of thymidine nucleotides and it decreases the intracellular concentration of dUTP so that uracil cannot be incorporated into DNA. This is Deoxyuridine 5'-triphosphate nucleotidohydrolase (DUT) from Fowlpox virus (strain NVSL) (FPV).